Here is a 373-residue protein sequence, read N- to C-terminus: Homoserine O-acetyltransferase (373 aa).

An AB hydrolase-1 domain is found at 52 to 356 (NVVMVLHALT…VYGHDGFLVE (305 aa)). Ser157 acts as the Nucleophile in catalysis. Arg227 serves as a coordination point for substrate. Catalysis depends on residues Asp320 and His350. Asp351 is a binding site for substrate.

The protein belongs to the AB hydrolase superfamily. MetX family. As to quaternary structure, homodimer.

It localises to the cytoplasm. The catalysed reaction is L-homoserine + acetyl-CoA = O-acetyl-L-homoserine + CoA. It functions in the pathway amino-acid biosynthesis; L-methionine biosynthesis via de novo pathway; O-acetyl-L-homoserine from L-homoserine: step 1/1. In terms of biological role, transfers an acetyl group from acetyl-CoA to L-homoserine, forming acetyl-L-homoserine. This chain is Homoserine O-acetyltransferase, found in Mycobacterium sp. (strain KMS).